The sequence spans 138 residues: Large ribosomal subunit protein uL16c (138 aa).

It belongs to the universal ribosomal protein uL16 family. As to quaternary structure, part of the 50S ribosomal subunit.

It localises to the plastid. The protein resides in the chloroplast. This Emiliania huxleyi (Coccolithophore) protein is Large ribosomal subunit protein uL16c.